The chain runs to 802 residues: Outer membrane usher protein CssD (802 aa).

Belongs to the fimbrial export usher family.

The protein localises to the cell outer membrane. Its function is as follows. Involved in the export and assembly of C6 fimbrial subunits across the outer membrane. This Escherichia coli protein is Outer membrane usher protein CssD (cssD).